The following is a 437-amino-acid chain: Adenosylhomocysteinase (437 aa).

Substrate is bound by residues Thr-54, Asp-130, and Glu-155. Thr-156–Thr-158 provides a ligand contact to NAD(+). Substrate-binding residues include Lys-185 and Asp-189. NAD(+) contacts are provided by residues Asn-190, Gly-219–Gly-224, Glu-242, Asn-277, Ile-298–His-300, and Asn-345.

It belongs to the adenosylhomocysteinase family. In terms of assembly, homotetramer. The cofactor is NAD(+).

It is found in the cytoplasm. The enzyme catalyses S-adenosyl-L-homocysteine + H2O = L-homocysteine + adenosine. The protein operates within amino-acid biosynthesis; L-homocysteine biosynthesis; L-homocysteine from S-adenosyl-L-homocysteine: step 1/1. Adenosylhomocysteine is a competitive inhibitor of S-adenosyl-L-methionine-dependent methyl transferase reactions; therefore adenosylhomocysteinase may play a key role in the control of methylations via regulation of the intracellular concentration of adenosylhomocysteine. The protein is Adenosylhomocysteinase of Leishmania donovani.